Reading from the N-terminus, the 1132-residue chain is DNA-directed RNA polymerase subunit beta (1132 aa).

It belongs to the RNA polymerase beta chain family. As to quaternary structure, the RNAP catalytic core consists of 2 alpha, 1 beta, 1 beta' and 1 omega subunit. When a sigma factor is associated with the core the holoenzyme is formed, which can initiate transcription.

The catalysed reaction is RNA(n) + a ribonucleoside 5'-triphosphate = RNA(n+1) + diphosphate. DNA-dependent RNA polymerase catalyzes the transcription of DNA into RNA using the four ribonucleoside triphosphates as substrates. The chain is DNA-directed RNA polymerase subunit beta from Carboxydothermus hydrogenoformans (strain ATCC BAA-161 / DSM 6008 / Z-2901).